The following is a 171-amino-acid chain: Co-chaperone protein HscB (171 aa).

The region spanning 2–74 (DYFTLFGLPA…LTRAEYLLSL (73 aa)) is the J domain.

The protein belongs to the HscB family. As to quaternary structure, interacts with HscA and stimulates its ATPase activity. Interacts with IscU.

Co-chaperone involved in the maturation of iron-sulfur cluster-containing proteins. Seems to help targeting proteins to be folded toward HscA. This is Co-chaperone protein HscB from Salmonella choleraesuis (strain SC-B67).